We begin with the raw amino-acid sequence, 191 residues long: Putative resolvase L103 (191 aa).

The segment at residues 11–30 (LEVLKVHYQTLYRMEEKGLI) is a DNA-binding region (H-T-H motif). Positions 59–191 (KGICYCRVSS…KKSGKLKAKK (133 aa)) constitute a Resolvase/invertase-type recombinase catalytic domain. Residues 65–91 (RVSSKKQIKDLNRQVEYMEKNYPEYEI) adopt a coiled-coil conformation. Residue Ser-67 is the O-(5'-phospho-DNA)-serine intermediate of the active site.

It belongs to the site-specific recombinase resolvase family.

Functionally, resolvase catalyzes the resolution (a site-specific recombination) of the cointegrated replicon to yield the final transposition products. This is Putative resolvase L103 from Acanthamoeba polyphaga (Amoeba).